Consider the following 99-residue polypeptide: MRIDILATAALLAQLASASPAPAKRQTYIACSGLYGTAQCCATDVLGLVNLDCGNPPSLPTSPDEFSSVCSAIGQRARCCVLPIVSFMRLIIQDYPISY.

Residues Met1–Ala18 form the signal peptide. Disulfide bonds link Cys31–Cys79, Cys40–Cys70, and Cys41–Cys53.

This sequence belongs to the cerato-ulmin hydrophobin family. Homodimer. Homodimers further self-assemble to form highly ordered films at water-air interfaces through intermolecular interactions.

The protein localises to the secreted. It is found in the cell wall. Aerial growth, conidiation, and dispersal of filamentous fungi in the environment rely upon a capability of their secreting small amphipathic proteins called hydrophobins (HPBs) with low sequence identity. Class I can self-assemble into an outermost layer of rodlet bundles on aerial cell surfaces, conferring cellular hydrophobicity that supports fungal growth, development and dispersal; whereas Class II form highly ordered films at water-air interfaces through intermolecular interactions but contribute nothing to the rodlet structure. Hyd3 is a class II hydrophobin required for barley root colonization. Hyd1 and Hyd3 are jointly required for conidial hydrophobicity and dispersal, but seem not to be involved in mycelia hydrophobicity. Inhibits conidial germination in environments not suitable for mycelial growth. Plays probably a role in intraspecific signaling or hyphal fusion. This is Class II hydrophobin 3 from Bionectria ochroleuca (Gliocladium roseum).